The following is a 244-amino-acid chain: MIIPAIDLIEGSVVRLYQGDYEQKTKYELDPIDVVNNYADQGAKWLHIVDLTGAKDTNKRQLKLIGDMVATGRMQFQAGGGIRSEQDVAQLLALGVKRVVIGSLAVKEPELVKGWVTKYGSEAIVLALDINIDEQGNKFIATHGWQENSGVSLEALLEDFLSVGAKHVLCTDISRDGTLQGANHQLYSEMAAKFPTIEWQASGGIGNLDDIAVLKPTHVSGVILGRALLEGKFTVEQAIECWQS.

The Proton acceptor role is filled by Asp7. Asp129 functions as the Proton donor in the catalytic mechanism.

This sequence belongs to the HisA/HisF family.

The protein resides in the cytoplasm. The enzyme catalyses 1-(5-phospho-beta-D-ribosyl)-5-[(5-phospho-beta-D-ribosylamino)methylideneamino]imidazole-4-carboxamide = 5-[(5-phospho-1-deoxy-D-ribulos-1-ylimino)methylamino]-1-(5-phospho-beta-D-ribosyl)imidazole-4-carboxamide. It functions in the pathway amino-acid biosynthesis; L-histidine biosynthesis; L-histidine from 5-phospho-alpha-D-ribose 1-diphosphate: step 4/9. The sequence is that of 1-(5-phosphoribosyl)-5-[(5-phosphoribosylamino)methylideneamino] imidazole-4-carboxamide isomerase from Pseudoalteromonas atlantica (strain T6c / ATCC BAA-1087).